We begin with the raw amino-acid sequence, 177 residues long: O-acetyl-ADP-ribose deacetylase (177 aa).

Positions 1 to 175 constitute a Macro domain; sequence MNSRIHVIHG…LYQRLLTQQG (175 aa). Residues 11–12, Asn-25, 33–35, and 122–126 each bind substrate; these read DI, GVD, and STGVY. Catalysis depends on Asp-35, which acts as the Proton acceptor.

It belongs to the MacroD-type family. YmdB subfamily. In terms of assembly, homodimer. Interacts with RNase III.

It catalyses the reaction 3''-O-acetyl-ADP-D-ribose + H2O = ADP-D-ribose + acetate + H(+). The enzyme catalyses 2''-O-acetyl-ADP-D-ribose + H2O = ADP-D-ribose + acetate + H(+). Functionally, deacetylates O-acetyl-ADP ribose to yield ADP-ribose and free acetate. Down-regulates ribonuclease 3 (RNase III) activity. Acts by interacting directly with the region of the ribonuclease that is required for dimerization/activation. This chain is O-acetyl-ADP-ribose deacetylase, found in Citrobacter rodentium (strain ICC168) (Citrobacter freundii biotype 4280).